We begin with the raw amino-acid sequence, 165 residues long: NADH-quinone oxidoreductase subunit I (165 aa).

2 consecutive 4Fe-4S ferredoxin-type domains span residues 57 to 86 (RRYDNGEERCIACKLCEAVCPALAITIESE) and 96 to 125 (SRYDIDLTKCIFCGFCEEACPVDAIVETHI). [4Fe-4S] cluster is bound by residues Cys66, Cys69, Cys72, Cys76, Cys105, Cys108, Cys111, and Cys115.

The protein belongs to the complex I 23 kDa subunit family. NDH-1 is composed of 14 different subunits. Subunits NuoA, H, J, K, L, M, N constitute the membrane sector of the complex. It depends on [4Fe-4S] cluster as a cofactor.

Its subcellular location is the cell inner membrane. The enzyme catalyses a quinone + NADH + 5 H(+)(in) = a quinol + NAD(+) + 4 H(+)(out). In terms of biological role, NDH-1 shuttles electrons from NADH, via FMN and iron-sulfur (Fe-S) centers, to quinones in the respiratory chain. The immediate electron acceptor for the enzyme in this species is believed to be ubiquinone. Couples the redox reaction to proton translocation (for every two electrons transferred, four hydrogen ions are translocated across the cytoplasmic membrane), and thus conserves the redox energy in a proton gradient. The polypeptide is NADH-quinone oxidoreductase subunit I (Polaromonas sp. (strain JS666 / ATCC BAA-500)).